The following is a 449-amino-acid chain: Ribulose bisphosphate carboxylase large chain (449 aa).

Positions 1–2 (MS) are excised as a propeptide. N-acetylproline is present on proline 3. Lysine 14 is subject to N6,N6,N6-trimethyllysine. Residues asparagine 123 and threonine 173 each coordinate substrate. The active-site Proton acceptor is the lysine 175. Lysine 177 is a substrate binding site. Mg(2+)-binding residues include lysine 201, aspartate 203, and glutamate 204. Lysine 201 bears the N6-carboxylysine mark. The active-site Proton acceptor is histidine 294. Substrate contacts are provided by residue 295, histidine 327, and serine 379.

The protein belongs to the RuBisCO large chain family. Type I subfamily. Heterohexadecamer of 8 large chains and 8 small chains; disulfide-linked. The disulfide link is formed within the large subunit homodimers. Mg(2+) is required as a cofactor. The disulfide bond which can form in the large chain dimeric partners within the hexadecamer appears to be associated with oxidative stress and protein turnover.

Its subcellular location is the plastid. The protein localises to the chloroplast. It catalyses the reaction 2 (2R)-3-phosphoglycerate + 2 H(+) = D-ribulose 1,5-bisphosphate + CO2 + H2O. The catalysed reaction is D-ribulose 1,5-bisphosphate + O2 = 2-phosphoglycolate + (2R)-3-phosphoglycerate + 2 H(+). In terms of biological role, ruBisCO catalyzes two reactions: the carboxylation of D-ribulose 1,5-bisphosphate, the primary event in carbon dioxide fixation, as well as the oxidative fragmentation of the pentose substrate in the photorespiration process. Both reactions occur simultaneously and in competition at the same active site. This is Ribulose bisphosphate carboxylase large chain from Salacia pallescens.